A 210-amino-acid polypeptide reads, in one-letter code: Chaperone protein TorD (210 aa).

The protein belongs to the TorD/DmsD family. TorD subfamily.

Its subcellular location is the cytoplasm. Involved in the biogenesis of TorA. Acts on TorA before the insertion of the molybdenum cofactor and, as a result, probably favors a conformation of the apoenzyme that is competent for acquiring the cofactor. This Salmonella dublin (strain CT_02021853) protein is Chaperone protein TorD.